We begin with the raw amino-acid sequence, 424 residues long: UPF0597 protein Sbal_3070 (424 aa).

This sequence belongs to the UPF0597 family.

The protein is UPF0597 protein Sbal_3070 of Shewanella baltica (strain OS155 / ATCC BAA-1091).